Here is a 159-residue protein sequence, read N- to C-terminus: Alpha-lactalbumin (159 aa).

The N-terminal stretch at 1-19 (MMRFVPLFLACISLPAFQA) is a signal peptide. The 123-residue stretch at 20-142 (TEFTKCEVSH…KLEQWRCEKP (123 aa)) folds into the C-type lysozyme domain. 4 disulfides stabilise this stretch: Cys25-Cys139, Cys47-Cys130, Cys80-Cys96, and Cys92-Cys110. Asn64 carries an N-linked (GlcNAc...) asparagine glycan. Ca(2+)-binding residues include Lys98, Asp101, Asp106, and Asp107.

It belongs to the glycosyl hydrolase 22 family. As to quaternary structure, lactose synthase (LS) is a heterodimer of a catalytic component, beta1,4-galactosyltransferase (beta4Gal-T1) and a regulatory component, alpha-lactalbumin (LA). As to expression, mammary gland specific. Secreted in milk.

It is found in the secreted. Regulatory subunit of lactose synthase, changes the substrate specificity of galactosyltransferase in the mammary gland making glucose a good acceptor substrate for this enzyme. This enables LS to synthesize lactose, the major carbohydrate component of milk. In other tissues, galactosyltransferase transfers galactose onto the N-acetylglucosamine of the oligosaccharide chains in glycoproteins. The chain is Alpha-lactalbumin (Lalba) from Rattus norvegicus (Rat).